Consider the following 312-residue polypeptide: Ribonuclease HIII (312 aa).

The region spanning 95–311 (FNCIGSDEAG…REKAQKILKP (217 aa)) is the RNase H type-2 domain. 3 residues coordinate a divalent metal cation: Asp-101, Glu-102, and Asp-206.

The protein belongs to the RNase HII family. RnhC subfamily. Mn(2+) is required as a cofactor. It depends on Mg(2+) as a cofactor.

Its subcellular location is the cytoplasm. It carries out the reaction Endonucleolytic cleavage to 5'-phosphomonoester.. Endonuclease that specifically degrades the RNA of RNA-DNA hybrids. This Staphylococcus aureus (strain MSSA476) protein is Ribonuclease HIII.